The chain runs to 423 residues: Glucose-1-phosphate adenylyltransferase (423 aa).

Alpha-D-glucose 1-phosphate is bound by residues Tyr98, Gly163, 178 to 179 (EK), and Ser189.

It belongs to the bacterial/plant glucose-1-phosphate adenylyltransferase family. Homotetramer.

It catalyses the reaction alpha-D-glucose 1-phosphate + ATP + H(+) = ADP-alpha-D-glucose + diphosphate. Its pathway is glycan biosynthesis; glycogen biosynthesis. Functionally, involved in the biosynthesis of ADP-glucose, a building block required for the elongation reactions to produce glycogen. Catalyzes the reaction between ATP and alpha-D-glucose 1-phosphate (G1P) to produce pyrophosphate and ADP-Glc. In Thermotoga maritima (strain ATCC 43589 / DSM 3109 / JCM 10099 / NBRC 100826 / MSB8), this protein is Glucose-1-phosphate adenylyltransferase.